The primary structure comprises 2864 residues: Genome polyprotein (2864 aa).

2 stretches are compositionally biased toward polar residues: residues 1–10 (MPVISTQTSP) and 21–32 (QTQASYPVSIKT). The interval 1-49 (MPVISTQTSPVPAPRTRKNKQTQASYPVSIKTSVERGQRAKRKVQRDAR) is disordered. The helical transmembrane segment at 133-153 (WATGWFGVHLFVVCLLSLACP) threads the bilayer. Residues Asn165, Asn212, and Asn264 are each glycosylated (N-linked (GlcNAc...) asparagine; by host). The chain crosses the membrane as a helical span at residues 324–344 (LIYYASRGKWYQLLLALMLYI). 6 N-linked (GlcNAc...) asparagine; by host glycosylation sites follow: Asn380, Asn400, Asn422, Asn446, Asn467, and Asn512. 5 consecutive transmembrane segments (helical) span residues 582–602 (AVVL…AYLC), 628–648 (AGWD…FFIC), 660–680 (LLGF…AAAA), 706–726 (PRIA…LLHL), and 737–757 (IIGG…RFGF). Residue Asn782 is glycosylated (N-linked (GlcNAc...) asparagine; by host). Helical transmembrane passes span 790-810 (FLLV…TFCV) and 847-867 (WYSH…GVFF). In terms of domain architecture, Peptidase C18 spans 819 to 940 (TSSAASFFGT…AMPPDGWAIT (122 aa)). Active-site for protease NS2 activity; shared with dimeric partner residues include His870, Glu888, and Cys909. The Peptidase S29 domain maps to 941 to 1122 (APFTLQCLSE…VCAGYHPQYT (182 aa)). Catalysis depends on charge relay system; for serine protease NS3 activity residues His997 and Asp1021. Positions 1037 and 1039 each coordinate Zn(2+). N-linked (GlcNAc...) asparagine; by host glycosylation is present at Asn1057. Ser1079 acts as the Charge relay system; for serine protease NS3 activity in catalysis. Positions 1085 and 1089 each coordinate Zn(2+). A Helicase ATP-binding domain is found at 1131-1281 (PTVPNEYSVQ…ANITEIQLTD (151 aa)). 1144–1151 (APTGSGKS) is an ATP binding site. Positions 1151 and 1229 each coordinate Mg(2+). The short motif at 1228–1231 (DECH) is the DECH box element. Residue Asn1273 is glycosylated (N-linked (GlcNAc...) asparagine; by host). Residues 1284–1449 (TIPFHGKKIK…GLSSTEAQTI (166 aa)) enclose the Helicase C-terminal domain. Asn1559 carries an N-linked (GlcNAc...) asparagine; by host glycan. Transmembrane regions (helical) follow at residues 1565 to 1585 (ALAV…FGAT), 1653 to 1673 (FLGP…GLVT), 1678 to 1698 (PFAS…PHKI), 1722 to 1742 (FMMA…GFVF), and 1783 to 1803 (AAGV…TAGP). Cys1863 is lipidated: S-palmitoyl cysteine; by host. A helical membrane pass occupies residues 1864–1884 (GLIAWGLEIWQYVCNFFVICF). The Zn(2+) site is built by Cys1905, Cys1923, Cys1925, and Cys1947. 2 disordered regions span residues 2139–2178 (TGSL…SPPV) and 2209–2266 (GPDD…TKKK). The segment covering 2226–2240 (SDGSWSTTTTASSYV) has biased composition (polar residues). The region spanning 2485 to 2603 (AVGATCDTVC…IWKSAGADAD (119 aa)) is the RdRp catalytic domain. Positions 2491, 2589, and 2590 each coordinate Mg(2+). Asn2640 and Asn2722 each carry an N-linked (GlcNAc...) asparagine; by host glycan. Residues 2844–2864 (VKYLAVIVFALGLIAVGLAIS) form a helical membrane-spanning segment.

As to quaternary structure, homooligomer. Interacts with E1 (via C-terminus). Interacts with the non-structural protein 5A. Part of the viral assembly initiation complex composed of NS2, E1, E2, NS3, NS4A, NS5A and the core protein. Forms a heterodimer with envelope glycoprotein E2. Interacts with the core protein. Interacts with protease NS2. Part of the viral assembly initiation complex composed of NS2, E1, E2, NS3, NS4A, NS5A and the core protein. In terms of assembly, forms a heterodimer with envelope glycoprotein E1. Part of the viral assembly initiation complex composed of NS2, E1, E2, NS3, NS4A, NS5A and the core protein. As to quaternary structure, homodimer. Interacts with envelope glycoprotein E1. Interacts with envelope glycoprotein E2. Interacts with viroporin p7. Interacts with serine protease/helicase NS3. Part of the replication complex composed of NS2, NS3, NS4A, NS4B, NS5A and the RNA-directed RNA polymerase embedded in an ER-derived membranous web. Part of the viral assembly initiation complex composed of NS2, E1, E2, NS3, NS4A, NS5A and the core protein. Interacts with protease NS2. Interacts with non-structural protein 4A; this interaction stabilizes the folding of NS3 serine protease. NS3-NS4A interaction is essential for NS3 activation and allows membrane anchorage of the latter. Interacts with host MAVS; this interaction leads to the cleavage and inhibition of host MAVS. Part of the replication complex composed of NS2, NS3, NS4A, NS4B, NS5A and the RNA-directed RNA polymerase embedded in an ER-derived membranous web. Part of the viral assembly initiation complex composed of NS2, E1, E2, NS3, NS4A, NS5A and the core protein. In terms of assembly, interacts with NS3 serine protease; this interaction stabilizes the folding of NS3 serine protease. NS3-NS4A interaction is essential for NS3 activation and allows membrane anchorage of the latter. Interacts with non-structural protein 5A (via N-terminus). Part of the replication complex composed of NS2, NS3, NS4A, NS4B, NS5A and the RNA-directed RNA polymerase embedded in an ER-derived membranous web. Part of the viral assembly initiation complex composed of NS2, E1, E2, NS3, NS4A, NS5A and the core protein. As to quaternary structure, monomer. Homodimer; dimerization is required for RNA-binding. Interacts with the core protein. Interacts (via N-terminus) with non-structural protein 4A. Interacts with non-structural protein 4B. Interacts with RNA-directed RNA polymerase. Part of the viral assembly initiation complex composed of NS2, E1, E2, NS3, NS4A, NS5A and the core protein. Part of the replication complex composed of NS2, NS3, NS4A, NS4B, NS5A and the RNA-directed RNA polymerase. Requires Zn(2+) as cofactor. Mg(2+) is required as a cofactor. Mn(2+) serves as cofactor. Specific enzymatic cleavages in vivo yield mature proteins. The structural proteins, core, E1, E2 and p7 are produced by proteolytic processing by host signal peptidases. The other proteins (p7, NS2, NS3, NS4A, NS4B, NS5A and NS5B) are cleaved by the viral proteases. Autoprocessing between NS2 and NS3 is mediated by the NS2 cysteine protease catalytic domain and regulated by the NS3 N-terminal domain. P13 may be further cleaved into p6 and p7 if the internal cleavage site is used. In terms of processing, highly N-glycosylated. Post-translationally, palmitoylated. This modification may play a role in its polymerization or in protein-protein interactions.

Its subcellular location is the virion. It is found in the host cytoplasm. The protein resides in the host lipid droplet. The protein localises to the virion membrane. It localises to the host endoplasmic reticulum membrane. Its subcellular location is the host perinuclear region. It is found in the host mitochondrion. The protein resides in the host nucleus. The enzyme catalyses Hydrolysis of four peptide bonds in the viral precursor polyprotein, commonly with Asp or Glu in the P6 position, Cys or Thr in P1 and Ser or Ala in P1'.. It catalyses the reaction a ribonucleoside 5'-triphosphate + H2O = a ribonucleoside 5'-diphosphate + phosphate + H(+). The catalysed reaction is ATP + H2O = ADP + phosphate + H(+). It carries out the reaction RNA(n) + a ribonucleoside 5'-triphosphate = RNA(n+1) + diphosphate. Its function is as follows. Packages viral RNA to form a viral nucleocapsid, and promotes virion budding. Participates in the viral particle production as a result of its interaction with the non-structural protein 5A. Binds RNA and may function as a RNA chaperone to induce the RNA structural rearrangements taking place during virus replication. Modulates viral translation initiation by interacting with viral IRES and 40S ribosomal subunit. Probably affects various cell signaling pathways, host immunity and lipid metabolism. In terms of biological role, forms a heterodimer with envelope glycoprotein E2, which mediates virus attachment to the host cell, virion internalization through clathrin-dependent endocytosis and fusion with host membrane. Fusion with the host cell is most likely mediated by both E1 and E2, through conformational rearrangements of the heterodimer required for fusion rather than a classical class II fusion mechanism. Functionally, forms a heterodimer with envelope glycoprotein E1, which mediates virus attachment to the host cell, virion internalization through clathrin-dependent endocytosis and fusion with host membrane. Fusion with the host cell is most likely mediated by both E1 and E2, through conformational rearrangements of the heterodimer required for fusion rather than a classical class II fusion mechanism. May function as a multimeric ion channel protein (viroporin). Its function is as follows. Cysteine protease required for the proteolytic auto-cleavage between the non-structural proteins NS2 and NS3. The N-terminus of NS3 is required for the function of NS2 protease (active region NS2-3). Promotes the initiation of viral particle assembly by mediating the interaction between structural and non-structural proteins. In terms of biological role, displays three enzymatic activities: serine protease with a chymotrypsin-like fold, NTPase and RNA helicase. NS3 serine protease, in association with NS4A, is responsible for the cleavages of NS3-NS4A, NS4A-NS4B, NS4B-NS5A and NS5A-NS5B. The NS3/NS4A complex prevents phosphorylation of host IRF3, thus preventing the establishment of dsRNA induced antiviral state. NS3 RNA helicase binds to RNA and unwinds both dsDNA and dsRNA in the 3' to 5' direction, and likely resolves RNA complicated stable secondary structures in the template strand. Cleaves host MAVS/CARDIF thereby preventing the establishment of an antiviral state. Functionally, induces a specific membrane alteration that serves as a scaffold for the virus replication complex. This membrane alteration gives rise to the so-called ER-derived membranous web that contains the replication complex. NS4B self-interaction contributes to its function in membranous web formation. Phosphorylated protein that is indispensable for viral replication and assembly. Its function is as follows. RNA-dependent RNA polymerase that performs primer-template recognition and RNA synthesis during viral replication. Initiates RNA transcription/replication at a flavin adenine dinucleotide (FAD), resulting in a 5'- FAD cap on viral RNAs. In this way, recognition of viral 5' RNA by host pattern recognition receptors can be bypassed, thereby evading activation of antiviral pathways. This chain is Genome polyprotein, found in Hepatitis GB virus B (GBV-B).